We begin with the raw amino-acid sequence, 77 residues long: Large ribosomal subunit protein eL14 (77 aa).

It belongs to the eukaryotic ribosomal protein eL14 family.

The polypeptide is Large ribosomal subunit protein eL14 (Methanococcus maripaludis (strain C6 / ATCC BAA-1332)).